The sequence spans 611 residues: CRS2-associated factor 2, chloroplastic (611 aa).

Residues 1–58 (MPPPPPQRPASSHVGRANLFSASPPPLSNRRYPHHRSLPLPPVSPRRRDPKKHSQQPS) constitute a chloroplast transit peptide. The disordered stretch occupies residues 1–72 (MPPPPPQRPA…TDSGPTRTVT (72 aa)). The span at 55 to 72 (QQPSQEEPTDSGPTRTVT) shows a compositional bias: polar residues. 2 CRM domains span residues 232–328 (EPLT…TRPR) and 350–446 (DGFT…YSKP). The CRS2 binding stretch occupies residues 486-509 (KMFKLWKSAVDSSLALLLDDAEAN). Residues 554-578 (MNDEPETSVAGNEEGQLEQSPDLRD) form a disordered region.

As to quaternary structure, interacts with CRS2 and RNA. Part of large ribonucleo-protein complexes that include group IIB introns, CRS2 and CAF2.

Its subcellular location is the plastid. The protein localises to the chloroplast stroma. In terms of biological role, required for the splicing of group IIB introns in chloroplasts. Forms splicing particles with CRS2. Interacts with RNA and confers intron specificity of the splicing particles. This is CRS2-associated factor 2, chloroplastic (CAF2) from Zea mays (Maize).